The chain runs to 277 residues: Diaminopimelate epimerase (277 aa).

Residues asparagine 13, glutamine 46, and asparagine 65 each coordinate substrate. Cysteine 74 serves as the catalytic Proton donor. Substrate-binding positions include 75–76 (GN), asparagine 158, asparagine 191, and 209–210 (ER). The active-site Proton acceptor is cysteine 218. 219-220 (GT) serves as a coordination point for substrate.

It belongs to the diaminopimelate epimerase family. As to quaternary structure, homodimer.

Its subcellular location is the cytoplasm. The catalysed reaction is (2S,6S)-2,6-diaminopimelate = meso-2,6-diaminopimelate. It functions in the pathway amino-acid biosynthesis; L-lysine biosynthesis via DAP pathway; DL-2,6-diaminopimelate from LL-2,6-diaminopimelate: step 1/1. Its function is as follows. Catalyzes the stereoinversion of LL-2,6-diaminopimelate (L,L-DAP) to meso-diaminopimelate (meso-DAP), a precursor of L-lysine and an essential component of the bacterial peptidoglycan. This chain is Diaminopimelate epimerase, found in Nitrosospira multiformis (strain ATCC 25196 / NCIMB 11849 / C 71).